Reading from the N-terminus, the 433-residue chain is Probable glycine dehydrogenase (decarboxylating) subunit 1 (433 aa).

This sequence belongs to the GcvP family. N-terminal subunit subfamily. The glycine cleavage system is composed of four proteins: P, T, L and H. In this organism, the P 'protein' is a heterodimer of two subunits.

The enzyme catalyses N(6)-[(R)-lipoyl]-L-lysyl-[glycine-cleavage complex H protein] + glycine + H(+) = N(6)-[(R)-S(8)-aminomethyldihydrolipoyl]-L-lysyl-[glycine-cleavage complex H protein] + CO2. The glycine cleavage system catalyzes the degradation of glycine. The P protein binds the alpha-amino group of glycine through its pyridoxal phosphate cofactor; CO(2) is released and the remaining methylamine moiety is then transferred to the lipoamide cofactor of the H protein. This Thermoplasma acidophilum (strain ATCC 25905 / DSM 1728 / JCM 9062 / NBRC 15155 / AMRC-C165) protein is Probable glycine dehydrogenase (decarboxylating) subunit 1.